Consider the following 164-residue polypeptide: Putative glutamine amidotransferase-like protein RP713 (164 aa).

The region spanning 39 to 164 is the Glutamine amidotransferase type-1 domain; that stretch reads TIANPNSLFM…VITVKIIIYM (126 aa).

The protein is Putative glutamine amidotransferase-like protein RP713 of Rickettsia prowazekii (strain Madrid E).